The primary structure comprises 101 residues: Protein S100-A11 (101 aa).

EF-hand domains are found at residues I13–S48 and K54–A89. Residues N30, K32, E37, D67, N69, D71, Q73, and E78 each contribute to the Ca(2+) site.

The protein belongs to the S-100 family. Homodimer; disulfide-linked. In terms of tissue distribution, smooth muscle and non-muscle tissues.

The sequence is that of Protein S100-A11 (S100A11) from Gallus gallus (Chicken).